The sequence spans 2284 residues: RNA1 polyprotein (2284 aa).

Over 569–1171 (CTAEEIFRMH…QVVVENYSLL (603 aa)) the chain is Cytoplasmic. Positions 751–919 (VSKLEEVHAR…DGSFFTPRAY (169 aa)) constitute an SF3 helicase domain. 781–788 (GASQSGKT) contributes to the ATP binding site. The chain crosses the membrane as a helical span at residues 1172–1192 (LTLVAILLLISAAYTLLSTVV). The Lumenal segment spans residues 1193 to 1217 (ALAGCSSFAGGMVAVTAVNNASIPC). Ser1218 is modified (O-(5'-phospho-RNA)-serine). A Peptidase C3 domain is found at 1243–1458 (GPSKGQGEHE…SVIPNYSSSF (216 aa)). Residues His1284, Glu1328, and Cys1420 each act as for picornain 3C-like protease activity in the active site. The RdRp catalytic domain occupies 1728-1852 (DVGYNCDYKA…TVAQSVMQYF (125 aa)).

Post-translationally, specific enzymatic cleavages by picornain 3C-like protease in vivo yield mature proteins. Picornain 3C-like protease is autocatalytically processed. VPg is uridylylated by the polymerase and is covalently linked to the 5'-end of genomic RNA. This uridylylated form acts as a nucleotide-peptide primer for the polymerase.

Its subcellular location is the host endoplasmic reticulum lumen. It is found in the host endoplasmic reticulum membrane. It carries out the reaction RNA(n) + a ribonucleoside 5'-triphosphate = RNA(n+1) + diphosphate. Functionally, picornain 3C-like protease is a thiol protease that cleaves the P1 and P2 polyproteins. In Vitis rupestris (Grape), this protein is RNA1 polyprotein.